The following is a 341-amino-acid chain: Putative [LysW]-lysine/[LysW]-ornithine hydrolase (341 aa).

A Zn(2+)-binding site is contributed by histidine 62. Aspartate 64 is a catalytic residue. A Zn(2+)-binding site is contributed by aspartate 86. Glutamate 115 functions as the Proton acceptor in the catalytic mechanism. Zn(2+) contacts are provided by glutamate 116, glutamate 140, and histidine 309.

The protein belongs to the peptidase M20A family. LysK subfamily. The cofactor is Zn(2+). It depends on Co(2+) as a cofactor.

It is found in the cytoplasm. The enzyme catalyses [amino-group carrier protein]-C-terminal-gamma-(L-lysyl)-L-glutamate + H2O = [amino-group carrier protein]-C-terminal-L-glutamate + L-lysine. The catalysed reaction is [amino-group carrier protein]-C-terminal-gamma-(L-ornithyl)-L-glutamate + H2O = [amino-group carrier protein]-C-terminal-L-glutamate + L-ornithine. Its pathway is amino-acid biosynthesis; L-lysine biosynthesis via AAA pathway; L-lysine from L-alpha-aminoadipate (Thermus route): step 5/5. It participates in amino-acid biosynthesis; L-arginine biosynthesis. Functionally, catalyzes the release of L-lysine from [LysW]-gamma-L-lysine and the release of L-ornithine from [LysW]-L-ornithine. This chain is Putative [LysW]-lysine/[LysW]-ornithine hydrolase, found in Pyrobaculum aerophilum (strain ATCC 51768 / DSM 7523 / JCM 9630 / CIP 104966 / NBRC 100827 / IM2).